The sequence spans 376 residues: Erythronate-4-phosphate dehydrogenase (376 aa).

Substrate-binding residues include S45 and T66. NAD(+) is bound by residues 126 to 127 (QV), D146, T174, 201 to 203 (ASR), and D227. R203 is a catalytic residue. E232 is a catalytic residue. The Proton donor role is filled by H249. G252 contributes to the NAD(+) binding site. Y253 is a substrate binding site.

The protein belongs to the D-isomer specific 2-hydroxyacid dehydrogenase family. PdxB subfamily. In terms of assembly, homodimer.

Its subcellular location is the cytoplasm. It catalyses the reaction 4-phospho-D-erythronate + NAD(+) = (R)-3-hydroxy-2-oxo-4-phosphooxybutanoate + NADH + H(+). It participates in cofactor biosynthesis; pyridoxine 5'-phosphate biosynthesis; pyridoxine 5'-phosphate from D-erythrose 4-phosphate: step 2/5. Catalyzes the oxidation of erythronate-4-phosphate to 3-hydroxy-2-oxo-4-phosphonooxybutanoate. In Ectopseudomonas mendocina (strain ymp) (Pseudomonas mendocina), this protein is Erythronate-4-phosphate dehydrogenase.